A 588-amino-acid polypeptide reads, in one-letter code: Succinate dehydrogenase flavoprotein subunit (588 aa).

FAD contacts are provided by residues 14-19, 37-52, and Asp221; these read GAGGAG and SKVF…AQGG. Residue His45 is modified to Tele-8alpha-FAD histidine. Residues His242 and Thr254 each coordinate substrate. Lys267 is modified (N6-acetyllysine). The Proton acceptor role is filled by Arg286. His354 is a substrate binding site. Glu388 contacts FAD. Arg399 contributes to the substrate binding site. Position 404–405 (404–405) interacts with FAD; it reads SL.

The protein belongs to the FAD-dependent oxidoreductase 2 family. FRD/SDH subfamily. Part of an enzyme complex containing four subunits: a flavoprotein, an iron-sulfur, cytochrome b-556, and a hydrophobic anchor protein. The complex forms trimers. It depends on FAD as a cofactor.

Its subcellular location is the cell inner membrane. It carries out the reaction a quinone + succinate = fumarate + a quinol. The protein operates within carbohydrate metabolism; tricarboxylic acid cycle; fumarate from succinate (bacterial route): step 1/1. Its function is as follows. Two distinct, membrane-bound, FAD-containing enzymes are responsible for the catalysis of fumarate and succinate interconversion; the fumarate reductase is used in anaerobic growth, and the succinate dehydrogenase is used in aerobic growth. The chain is Succinate dehydrogenase flavoprotein subunit (sdhA) from Escherichia coli O157:H7.